The sequence spans 140 residues: Gas vesicle protein O (140 aa).

Basic and acidic residues predominate over residues 1–14; it reads MSDQGNEHANHDGI. The segment at 1 to 61 is disordered; the sequence is MSDQGNEHAN…DSTIGLSDAQ (61 aa). A compositionally biased stretch (polar residues) spans 39-56; sequence QTASDEAVSNQSPDSTIG.

Belongs to the gas vesicle GvpO family. In terms of assembly, forms homodimers, forms a GvpN-GvpO heterodimer, interacts with GvpC, GvpF, GvpI and GvpL, might interact with GvpA.

Its subcellular location is the gas vesicle. The protein localises to the cytoplasm. Functionally, a minor component of the gas vesicle (GV), may play a role in transcription and/or RNA stability and/or in GV assembly. Gas vesicles are small, hollow, gas filled protein structures found in some microorganisms. They allow positioning of halobacteria at the optimal depth for growth in the poorly aerated shallow brine pools of their habitat. Expression of a 9.5 kb mc-vac DNA fragment containing 2 divergently transcribed regions (gvpD-gvpE-gvpF-gvpG-gvpH-gvpI-gvpJ-gvpK-gvpL-gvpM and gvpA-gvpC-gvpN-gvpO) allows H.volcanii to produce gas vesicles. This Haloferax mediterranei (strain ATCC 33500 / DSM 1411 / JCM 8866 / NBRC 14739 / NCIMB 2177 / R-4) (Halobacterium mediterranei) protein is Gas vesicle protein O.